Reading from the N-terminus, the 253-residue chain is Low affinity immunoglobulin gamma Fc region receptor III-A (253 aa).

The first 20 residues, 1–20, serve as a signal peptide directing secretion; sequence MGQPLPPVALLLLVSASSRA. The Extracellular segment spans residues 21–207; sequence ADVPKALVLL…ISSSVLPWHQ (187 aa). 2 Ig-like C2-type domains span residues 24–90 and 99–189; these read PKAL…YRCQ and PVQL…VTIT. 2 disulfides stabilise this stretch: C47–C89 and C128–C172. N-linked (GlcNAc...) asparagine glycosylation is found at N56, N63, N165, and N180. A helical membrane pass occupies residues 208–226; the sequence is IAFCLVMGLLLAADTGLYF. Over 227-253 the chain is Cytoplasmic; it reads SVQRDLRSSQRARKEHTLGWSLGSQDK.

Forms a heterooligomeric complex with ITAM-containing signaling subunits FCER1G. Interacts (via transmembrane domain) with signaling subunits; this interaction is a prerequisite for receptor complex expression on the cell surface and intracellular signal transduction. Binds the Fc region of antigen-complexed IgG.

The protein localises to the cell membrane. Its function is as follows. Receptor for the invariable Fc fragment of immunoglobulin gamma (IgG). Optimally activated upon binding of clustered antigen-IgG complexes displayed on cell surfaces, triggers lysis of antibody-coated cells, a process known as antibody-dependent cellular cytotoxicity (ADCC). Does not bind free monomeric IgG, thus avoiding inappropriate effector cell activation in the absence of antigenic trigger. Mediates IgG effector functions on natural killer (NK) cells. Binds antigen-IgG complexes generated upon infection and triggers NK cell-dependent cytokine production and degranulation to limit viral load and propagation. Fc-binding subunit that associates with FCER1G adapter to form functional signaling complexes. Following the engagement of antigen-IgG complexes, triggers phosphorylation of immunoreceptor tyrosine-based activation motif (ITAM)-containing adapters with subsequent activation of phosphatidylinositol 3-kinase signaling and sustained elevation of intracellular calcium that ultimately drive NK cell activation. Mediates enhanced ADCC in response to afucosylated IgGs. The polypeptide is Low affinity immunoglobulin gamma Fc region receptor III-A (Oryctolagus cuniculus (Rabbit)).